The sequence spans 1004 residues: Sal-like protein 2 (1004 aa).

Disordered stretches follow at residues 1-33 (MSRR…EDHP), 51-122 (AHQN…EESS), 137-177 (GGGL…SGHL), 220-270 (PASP…EPPK), and 285-307 (PFSV…ALPG). Residues 34–56 (QVCAKCCAQFSDPTEFLAHQNSC) form a C2H2-type 1; atypical zinc finger. The span at 71–81 (NPSNSSASSAP) shows a compositional bias: low complexity. Over residues 83–98 (PEGHSRSQVMDTEHSN) the composition is skewed to basic and acidic residues. A compositionally biased stretch (low complexity) spans 99 to 110 (PPDSGSSGAPDP). Positions 151-171 (PLPPESTPAPPPPPPPPPPPG) are enriched in pro residues. At Ser243 the chain carries Phosphoserine. C2H2-type zinc fingers lie at residues 372-394 (HKCR…LRSH), 400-422 (YKCN…FHRH), 629-651 (NQCV…YGQH), 657-679 (FKCK…FVGH), and 689-711 (NSCP…VRMH). The segment at 712–910 (LGGQIPNGGS…PGESSGRKAC (199 aa)) is disordered. Residues 731–742 (QENSSEQSTASG) are compositionally biased toward polar residues. Acidic residues predominate over residues 756–779 (PEEEMSEEEEEDEEEEEDVTDEDS). Phosphoserine is present on residues Ser794, Ser799, and Ser803. A compositionally biased stretch (acidic residues) spans 800 to 809 (EEVSGAEEEV). Positions 810–819 (ATSVAAPTTV) are enriched in low complexity. The span at 820-829 (KEMDSNEKAP) shows a compositional bias: basic and acidic residues. Residues 832–841 (TLPPPPPPPD) are compositionally biased toward pro residues. The segment covering 896–910 (AMKKDPGESSGRKAC) has biased composition (basic and acidic residues). Lys908 is covalently cross-linked (Glycyl lysine isopeptide (Lys-Gly) (interchain with G-Cter in ubiquitin)). C2H2-type zinc fingers lie at residues 908–930 (KACE…QKTH) and 937–961 (FTCV…LAHH).

It belongs to the sal C2H2-type zinc-finger protein family. In terms of tissue distribution, expressed throughout embryonic development. In adult predominantly in brain.

Its subcellular location is the nucleus. Functionally, probable transcription factor that plays a role in eye development before, during, and after optic fissure closure. The chain is Sal-like protein 2 (Sall2) from Mus musculus (Mouse).